The sequence spans 474 residues: MEDSLTTITTAAIIGAGLAGCECALRLARAGVRVTLFEMKPAAFSPAHSNPDLGELVCSNSLRSDDIASGVGLLKQEMRELGSIVMEAADATRVPAGKALAVDRDLFARHITAVIEAEPGITLERREVASLDDPALASADVVVIAAGPLASAGLSDSLAAVVGGQLYFYDAIAPIIAAESIDLSIVFSGSRYGEPGEEGDYLNCPMNRDEYDAFYEALLAAEKVPSRDFEKELHFEGCMPIEALAERGPRTLVFGPFKPVGFTDPRTGTRPYAIIQLRAENRNKTAFNIVGCQTKLKYAEQERVFRMIPGLAGAEFVRHGSVHRNTYVNAPRVLADDLSLRADKRVFLAGQITGVEGYVESAACGMWLGMVLAARIQGRELPTPPPQTALGALLMHLRTPVKNFQPSNANFGLMPELGLKVKKRERKPLYSARAREHFVRWLAEAGVTPVIEPLLPTAPDTTGAAGEETTQAES.

15–20 (GAGLAG) contributes to the FAD binding site. The disordered stretch occupies residues 453–474 (PLLPTAPDTTGAAGEETTQAES).

Belongs to the MnmG family. TrmFO subfamily. FAD serves as cofactor.

It localises to the cytoplasm. The catalysed reaction is uridine(54) in tRNA + (6R)-5,10-methylene-5,6,7,8-tetrahydrofolate + NADH + H(+) = 5-methyluridine(54) in tRNA + (6S)-5,6,7,8-tetrahydrofolate + NAD(+). The enzyme catalyses uridine(54) in tRNA + (6R)-5,10-methylene-5,6,7,8-tetrahydrofolate + NADPH + H(+) = 5-methyluridine(54) in tRNA + (6S)-5,6,7,8-tetrahydrofolate + NADP(+). Catalyzes the folate-dependent formation of 5-methyl-uridine at position 54 (M-5-U54) in all tRNAs. The chain is Methylenetetrahydrofolate--tRNA-(uracil-5-)-methyltransferase TrmFO from Nitratidesulfovibrio vulgaris (strain ATCC 29579 / DSM 644 / CCUG 34227 / NCIMB 8303 / VKM B-1760 / Hildenborough) (Desulfovibrio vulgaris).